The chain runs to 67 residues: DNA gyrase inhibitor YacG (67 aa).

Zn(2+) is bound by residues Cys-10, Cys-13, Cys-29, and Cys-33.

It belongs to the DNA gyrase inhibitor YacG family. In terms of assembly, interacts with GyrB. Zn(2+) serves as cofactor.

Inhibits all the catalytic activities of DNA gyrase by preventing its interaction with DNA. Acts by binding directly to the C-terminal domain of GyrB, which probably disrupts DNA binding by the gyrase. This is DNA gyrase inhibitor YacG from Pasteurella multocida (strain Pm70).